Reading from the N-terminus, the 404-residue chain is Cystinosin homolog (404 aa).

Over 20–123 the chain is Lumenal; the sequence is TNNLVVRQKE…FARITVIRSH (104 aa). N46, N53, N79, and N97 each carry an N-linked (GlcNAc...) asparagine glycan. Residues 124 to 144 form a helical membrane-spanning segment; that stretch reads FLAILIQIVGWTYFFAWSISF. The PQ-loop 1 domain occupies 125-191; the sequence is LAILIQIVGW…MYYNSHVKNE (67 aa). Topologically, residues 145 to 163 are cytoplasmic; that stretch reads YPQMYLNFKRKSVVGLNFD. A helical membrane pass occupies residues 164–184; the sequence is FLSLNLVGFCAYAIFNLLMYY. Residues 185-207 lie on the Lumenal side of the membrane; sequence NSHVKNEYNIVNPRSPPPVLLND. A helical transmembrane segment spans residues 208–228; it reads VVFAVHAFLACFITILQCLFY. The Cytoplasmic portion of the chain corresponds to 229–238; the sequence is ERDNQSVSSK. The helical transmembrane segment at 239-259 threads the bilayer; sequence CIALMIVLISFGFCSAAATVL. Residues 260–263 lie on the Lumenal side of the membrane; sequence RKIQ. Residues 264-285 form a helical membrane-spanning segment; sequence LLSFVTSLSYIKMAVTCCKYFP. The region spanning 266–327 is the PQ-loop 2 domain; it reads SFVTSLSYIK…MILQAVNVND (62 aa). The Cytoplasmic portion of the chain corresponds to 286-295; that stretch reads QAYFNYTRKS. The chain crosses the membrane as a helical span at residues 296–316; sequence TVGWSIGNIMLDFTGGTLDIL. The Lumenal segment spans residues 317 to 337; the sequence is QMILQAVNVNDWSAFYANPVK. A helical membrane pass occupies residues 338-358; sequence FGLGFVSIFFDIIFMVQHYVL. Over 359 to 404 the chain is Cytoplasmic; the sequence is YPNAEVPHNEYHGVDNPNPDNIARDAEQYAGDSESMESTEPIIVHD.

It belongs to the cystinosin family.

The protein localises to the lysosome membrane. The protein resides in the cytoplasmic vesicle. Its subcellular location is the phagosome. It catalyses the reaction L-cystine(out) + H(+)(out) = L-cystine(in) + H(+)(in). Functionally, cystine/H(+) symporter that mediates export of cystine, the oxidized dimer of cysteine, from lysosomes. May play a role in the degradation of engulfed apoptotic cells. The chain is Cystinosin homolog (ctns-1) from Caenorhabditis elegans.